The primary structure comprises 317 residues: tRNA(Ile)-lysidine synthase (317 aa).

Residue 30 to 35 (SGGSDS) participates in ATP binding.

It belongs to the tRNA(Ile)-lysidine synthase family.

Its subcellular location is the cytoplasm. It carries out the reaction cytidine(34) in tRNA(Ile2) + L-lysine + ATP = lysidine(34) in tRNA(Ile2) + AMP + diphosphate + H(+). In terms of biological role, ligates lysine onto the cytidine present at position 34 of the AUA codon-specific tRNA(Ile) that contains the anticodon CAU, in an ATP-dependent manner. Cytidine is converted to lysidine, thus changing the amino acid specificity of the tRNA from methionine to isoleucine. This chain is tRNA(Ile)-lysidine synthase, found in Chlamydia felis (strain Fe/C-56) (Chlamydophila felis).